The primary structure comprises 281 residues: Undecaprenyl-diphosphatase 1 (281 aa).

The next 6 helical transmembrane spans lie at 95-115 (WMVIAGTIPVGLAGVLLKDLI), 119-139 (FRNLWITATVLILFSLVFILA), 152-172 (LTMKDAVLMGLWQCLALIPGV), 195-215 (FSFLLAIPAVLASGLFSLPDA), 227-247 (LQLLVGSGIGFVVGYISIAWL), and 256-276 (FAWFAAYRIPLGLLVMALLGT).

The protein belongs to the UppP family.

The protein resides in the cell membrane. The catalysed reaction is di-trans,octa-cis-undecaprenyl diphosphate + H2O = di-trans,octa-cis-undecaprenyl phosphate + phosphate + H(+). Its function is as follows. Catalyzes the dephosphorylation of undecaprenyl diphosphate (UPP). Confers resistance to bacitracin. The protein is Undecaprenyl-diphosphatase 1 of Corynebacterium jeikeium (strain K411).